Consider the following 323-residue polypeptide: Aspartate carbamoyltransferase catalytic subunit (323 aa).

Carbamoyl phosphate contacts are provided by Arg71 and Thr72. L-aspartate is bound at residue Lys99. Carbamoyl phosphate is bound by residues Arg121, His151, and Gln154. L-aspartate contacts are provided by Arg184 and Arg239. Carbamoyl phosphate contacts are provided by Gly280 and Pro281.

Belongs to the aspartate/ornithine carbamoyltransferase superfamily. ATCase family. As to quaternary structure, heterododecamer (2C3:3R2) of six catalytic PyrB chains organized as two trimers (C3), and six regulatory PyrI chains organized as three dimers (R2).

It catalyses the reaction carbamoyl phosphate + L-aspartate = N-carbamoyl-L-aspartate + phosphate + H(+). The protein operates within pyrimidine metabolism; UMP biosynthesis via de novo pathway; (S)-dihydroorotate from bicarbonate: step 2/3. Catalyzes the condensation of carbamoyl phosphate and aspartate to form carbamoyl aspartate and inorganic phosphate, the committed step in the de novo pyrimidine nucleotide biosynthesis pathway. This chain is Aspartate carbamoyltransferase catalytic subunit, found in Ralstonia nicotianae (strain ATCC BAA-1114 / GMI1000) (Ralstonia solanacearum).